Reading from the N-terminus, the 416-residue chain is UDP-N-acetylglucosamine 1-carboxyvinyltransferase (416 aa).

22-23 (KN) contacts phosphoenolpyruvate. Arg-92 is a UDP-N-acetyl-alpha-D-glucosamine binding site. Cys-116 (proton donor) is an active-site residue. At Cys-116 the chain carries 2-(S-cysteinyl)pyruvic acid O-phosphothioketal. UDP-N-acetyl-alpha-D-glucosamine contacts are provided by residues 121–125 (RPVDQ), Asp-304, and Ile-326.

It belongs to the EPSP synthase family. MurA subfamily.

It localises to the cytoplasm. It carries out the reaction phosphoenolpyruvate + UDP-N-acetyl-alpha-D-glucosamine = UDP-N-acetyl-3-O-(1-carboxyvinyl)-alpha-D-glucosamine + phosphate. It functions in the pathway cell wall biogenesis; peptidoglycan biosynthesis. In terms of biological role, cell wall formation. Adds enolpyruvyl to UDP-N-acetylglucosamine. This chain is UDP-N-acetylglucosamine 1-carboxyvinyltransferase, found in Cupriavidus metallidurans (strain ATCC 43123 / DSM 2839 / NBRC 102507 / CH34) (Ralstonia metallidurans).